A 231-amino-acid chain; its full sequence is N-acetylmuramate alpha-1-phosphate uridylyltransferase (231 aa).

UTP is bound by residues 11 to 13 (GER) and Lys-23. Asn-106 serves as a coordination point for substrate. A Mg(2+)-binding site is contributed by Asp-108. Residues Asp-146 and Asp-213 each contribute to the substrate site. Mg(2+) is bound at residue Asp-213.

It belongs to the nucleotidyltransferase MurU family. As to quaternary structure, monomer. The cofactor is Mg(2+).

The catalysed reaction is N-acetyl-alpha-D-muramate 1-phosphate + UDP + H(+) = UDP-N-acetyl-alpha-D-muramate + phosphate. It participates in cell wall biogenesis; peptidoglycan recycling. Catalyzes the formation of UDP-N-acetylmuramate (UDP-MurNAc), a crucial precursor of the bacterial peptidoglycan cell wall, from UTP and MurNAc-alpha-1P. Is likely involved in peptidoglycan recycling as part of a cell wall recycling pathway that bypasses de novo biosynthesis of the peptidoglycan precursor UDP-MurNAc. Is able to complement the fosfomycin sensitivity phenotype of a P.putida mutant lacking murU. The sequence is that of N-acetylmuramate alpha-1-phosphate uridylyltransferase from Neisseria meningitidis serogroup B (strain ATCC BAA-335 / MC58).